We begin with the raw amino-acid sequence, 71 residues long: MATRDSGGQSQTGRSQQGEEIEDVTTEASPEVAERHAEITEDVDDLLDEIDSVLEENAEEFVRGYVQKGGE.

The segment covering 1-18 (MATRDSGGQSQTGRSQQG) has biased composition (low complexity). The interval 1-42 (MATRDSGGQSQTGRSQQGEEIEDVTTEASPEVAERHAEITED) is disordered. The ARC ATPase binding stretch occupies residues 27 to 65 (EASPEVAERHAEITEDVDDLLDEIDSVLEENAEEFVRGY). Positions 31 to 60 (EVAERHAEITEDVDDLLDEIDSVLEENAEE) form a coiled coil. E71 participates in a covalent cross-link: Isoglutamyl lysine isopeptide (Glu-Lys) (interchain with K-? in acceptor proteins).

Belongs to the prokaryotic ubiquitin-like protein family. Strongly interacts with the proteasome-associated ATPase ARC through a hydrophobic interface; the interacting region of Pup lies in its C-terminal half. There is one Pup binding site per ARC hexamer ring.

It functions in the pathway protein degradation; proteasomal Pup-dependent pathway. In terms of biological role, protein modifier that is covalently attached to lysine residues of substrate proteins, thereby targeting them for proteasomal degradation. The tagging system is termed pupylation. The polypeptide is Prokaryotic ubiquitin-like protein Pup (Salinispora arenicola (strain CNS-205)).